We begin with the raw amino-acid sequence, 526 residues long: Meiotically up-regulated gene 99 protein, mitochondrial (526 aa).

The next 2 membrane-spanning stretches (helical) occupy residues 398–418 and 421–441; these read TLYT…LYFV and FSLY…LYYL.

Its subcellular location is the mitochondrion membrane. Its function is as follows. Required for correct meiotic chromosome segregation. Appears to also have role in sporulation. This Schizosaccharomyces pombe (strain 972 / ATCC 24843) (Fission yeast) protein is Meiotically up-regulated gene 99 protein, mitochondrial (mug99).